Reading from the N-terminus, the 388-residue chain is Succinate--CoA ligase [ADP-forming] subunit beta (388 aa).

An ATP-grasp domain is found at 9 to 244; the sequence is KAIFRSMGVA…LEEEDPKEIE (236 aa). ATP is bound by residues Lys46, 53-55, Glu99, Cys102, and Glu107; that span reads GRG. Asn199 and Asp213 together coordinate Mg(2+). Substrate is bound by residues Asn264 and 321 to 323; that span reads GIM.

The protein belongs to the succinate/malate CoA ligase beta subunit family. Heterotetramer of two alpha and two beta subunits. The cofactor is Mg(2+).

The enzyme catalyses succinate + ATP + CoA = succinyl-CoA + ADP + phosphate. It carries out the reaction GTP + succinate + CoA = succinyl-CoA + GDP + phosphate. Its pathway is carbohydrate metabolism; tricarboxylic acid cycle; succinate from succinyl-CoA (ligase route): step 1/1. Its function is as follows. Succinyl-CoA synthetase functions in the citric acid cycle (TCA), coupling the hydrolysis of succinyl-CoA to the synthesis of either ATP or GTP and thus represents the only step of substrate-level phosphorylation in the TCA. The beta subunit provides nucleotide specificity of the enzyme and binds the substrate succinate, while the binding sites for coenzyme A and phosphate are found in the alpha subunit. The sequence is that of Succinate--CoA ligase [ADP-forming] subunit beta from Staphylococcus saprophyticus subsp. saprophyticus (strain ATCC 15305 / DSM 20229 / NCIMB 8711 / NCTC 7292 / S-41).